A 795-amino-acid chain; its full sequence is Phenylalanine--tRNA ligase beta subunit (795 aa).

The tRNA-binding domain maps to A39 to R148. One can recognise a B5 domain in the interval P401–D476. Residues D454, D460, E463, and E464 each coordinate Mg(2+). Residues S701–R794 enclose the FDX-ACB domain.

The protein belongs to the phenylalanyl-tRNA synthetase beta subunit family. Type 1 subfamily. In terms of assembly, tetramer of two alpha and two beta subunits. Mg(2+) serves as cofactor.

The protein localises to the cytoplasm. The enzyme catalyses tRNA(Phe) + L-phenylalanine + ATP = L-phenylalanyl-tRNA(Phe) + AMP + diphosphate + H(+). In Photorhabdus laumondii subsp. laumondii (strain DSM 15139 / CIP 105565 / TT01) (Photorhabdus luminescens subsp. laumondii), this protein is Phenylalanine--tRNA ligase beta subunit.